We begin with the raw amino-acid sequence, 187 residues long: Ribosome-recycling factor (187 aa).

It belongs to the RRF family.

Its subcellular location is the cytoplasm. In terms of biological role, responsible for the release of ribosomes from messenger RNA at the termination of protein biosynthesis. May increase the efficiency of translation by recycling ribosomes from one round of translation to another. This Anaeromyxobacter sp. (strain Fw109-5) protein is Ribosome-recycling factor.